Here is a 282-residue protein sequence, read N- to C-terminus: Deoxyribonuclease-1 (282 aa).

An N-terminal signal peptide occupies residues Met-1 to Thr-20. A glycan (N-linked (GlcNAc...) asparagine) is linked at Asn-38. Residue Glu-98 is part of the active site. Residues Cys-121 and Cys-124 are joined by a disulfide bond. His-154 is a catalytic residue. A disulfide bridge links Cys-193 with Cys-229.

It belongs to the DNase I family. Ca(2+) serves as cofactor. Requires Mg(2+) as cofactor. N-glycosylated.

The protein localises to the secreted. It is found in the zymogen granule. The protein resides in the nucleus envelope. The catalysed reaction is Endonucleolytic cleavage to 5'-phosphodinucleotide and 5'-phosphooligonucleotide end-products.. Serum endocuclease secreted into body fluids by a wide variety of exocrine and endocrine organs. Expressed by non-hematopoietic tissues and preferentially cleaves protein-free DNA. Among other functions, seems to be involved in cell death by apoptosis. Binds specifically to G-actin and blocks actin polymerization. This is Deoxyribonuclease-1 (DNASE1) from Gallus gallus (Chicken).